The following is a 115-amino-acid chain: Large ribosomal subunit protein bL19 (115 aa).

The protein belongs to the bacterial ribosomal protein bL19 family.

This protein is located at the 30S-50S ribosomal subunit interface and may play a role in the structure and function of the aminoacyl-tRNA binding site. The polypeptide is Large ribosomal subunit protein bL19 (Lactobacillus delbrueckii subsp. bulgaricus (strain ATCC BAA-365 / Lb-18)).